A 436-amino-acid chain; its full sequence is MFFKLLKDAFKIKQVRSKILFTIFIILVFRIGTTITVPGVNAKSLEALSGLSFLNMLSLVSGNAMKNFSVFALGVSPYITASIVVQLLQMDLLPKFVEWGKQGEVGRRKLNQATRYISLALAFVQSIGITAGFNALSSTKLVAAPNWQTYLFIGAVLTTGSMIVVWLGEQITDKGYGNGVSMIIFAGIVASIPEMVKGIYEDYFVNVPSDRLQSSIIFVACLIVAVLLIVYFTTYVQQAEYKIPIQYTKIAQGAPSSSYLPLKVNPAGVIPVIFASSITAAPAAVLQFLSASGNDWGWVRTAQSLLATTTPTGIAMYALLIILFTFFYTFVQINPEKAAENLQKSGAYIPGVRPGKGTEQFMSKLLRRLATVGSLFLGFISIIPIIAKDLFGLSDTVALGGTSLLIIIATGIEGMKQLEGYLLKRKYTGFMNTTTK.

The next 10 helical transmembrane spans lie at 19–39 (ILFT…TVPG), 68–88 (FSVF…VQLL), 116–136 (YISL…FNAL), 151–171 (LFIG…GEQI), 179–199 (GVSM…VKGI), 216–236 (IIFV…TTYV), 269–289 (VIPV…LQFL), 313–333 (GIAM…FVQI), 372–392 (VGSL…DLFG), and 395–415 (DTVA…IEGM).

This sequence belongs to the SecY/SEC61-alpha family. Component of the Sec protein translocase complex. Heterotrimer consisting of SecY, SecE and SecG subunits. The heterotrimers can form oligomers, although 1 heterotrimer is thought to be able to translocate proteins. Interacts with the ribosome. Interacts with SecDF, and other proteins may be involved. Interacts with SecA.

It is found in the cell membrane. Functionally, the central subunit of the protein translocation channel SecYEG. Consists of two halves formed by TMs 1-5 and 6-10. These two domains form a lateral gate at the front which open onto the bilayer between TMs 2 and 7, and are clamped together by SecE at the back. The channel is closed by both a pore ring composed of hydrophobic SecY resides and a short helix (helix 2A) on the extracellular side of the membrane which forms a plug. The plug probably moves laterally to allow the channel to open. The ring and the pore may move independently. The chain is Protein translocase subunit SecY from Streptococcus gordonii (strain Challis / ATCC 35105 / BCRC 15272 / CH1 / DL1 / V288).